Reading from the N-terminus, the 63-residue chain is MPIAQLYILDGRSNEQKETLIREVSEAMSRSLDAPIERVRVIITEMPKNHFGIGGEPASKLNR.

The Proton acceptor; via imino nitrogen role is filled by Pro2.

It belongs to the 4-oxalocrotonate tautomerase family. In terms of assembly, homohexamer.

It carries out the reaction (2Z,4E)-2-hydroxyhexa-2,4-dienedioate = (3E)-2-oxohex-3-enedioate. The protein operates within aromatic compound metabolism; salicylate degradation. Its function is as follows. Catalyzes the ketonization of 2-hydroxymuconate stereoselectively to yield 2-oxo-3-hexenedioate. This chain is 2-hydroxymuconate tautomerase (nahJ), found in Pseudomonas fluorescens.